Here is a 24-residue protein sequence, read N- to C-terminus: FLPFIARLAAKVFPSIICSVTKKC.

An intrachain disulfide couples C18 to C24.

It belongs to the frog skin active peptide (FSAP) family. Ranatuerin subfamily. In terms of tissue distribution, expressed by the skin glands.

The protein resides in the secreted. Antibacterial activity against Gram-positive bacterium S.aureus (MIC=55 uM). Shows no detectable hemolytic activity towards human erythrocytes. The chain is Ranatuerin-4 from Aquarana catesbeiana (American bullfrog).